A 276-amino-acid polypeptide reads, in one-letter code: Diaminopimelate epimerase (276 aa).

Substrate contacts are provided by Asn13, Gln46, and Asn66. Cys75 (proton donor) is an active-site residue. Substrate-binding positions include 76-77 (GN), Asn159, Asn192, and 210-211 (ER). The Proton acceptor role is filled by Cys219. 220 to 221 (GT) lines the substrate pocket.

It belongs to the diaminopimelate epimerase family. As to quaternary structure, homodimer.

It localises to the cytoplasm. The enzyme catalyses (2S,6S)-2,6-diaminopimelate = meso-2,6-diaminopimelate. Its pathway is amino-acid biosynthesis; L-lysine biosynthesis via DAP pathway; DL-2,6-diaminopimelate from LL-2,6-diaminopimelate: step 1/1. In terms of biological role, catalyzes the stereoinversion of LL-2,6-diaminopimelate (L,L-DAP) to meso-diaminopimelate (meso-DAP), a precursor of L-lysine and an essential component of the bacterial peptidoglycan. The protein is Diaminopimelate epimerase of Pseudomonas syringae pv. tomato (strain ATCC BAA-871 / DC3000).